The sequence spans 337 residues: GDP-mannose transporter 1 (337 aa).

Over 1 to 16 (MSELKTGHAGHNPWAS) the chain is Cytoplasmic. The chain crosses the membrane as a helical span at residues 17–37 (VANSGPISILSYCGSSILMTV). Over 38-51 (TNKFVVNLKDFNMN) the chain is Lumenal. A helical membrane pass occupies residues 52–72 (FVMLFVQSLVCTITLIILRIL). At 73–92 (GYAKFRSLNKTDAKNWFPIS) the chain is on the cytoplasmic side. The helical transmembrane segment at 93 to 113 (FLLVLMIYTSSKALQYLAVPI) threads the bilayer. The Lumenal segment spans residues 114-119 (YTIFKN). The N-linked (GlcNAc...) asparagine glycan is linked to asparagine 119. Residues 120–140 (LTIILIAYGEVLFFGGSVTSM) traverse the membrane as a helical segment. The Cytoplasmic segment spans residues 141 to 144 (ELSS). The chain crosses the membrane as a helical span at residues 145 to 165 (FLLMVLSSVVATWGDQQAVAA). Topologically, residues 166–180 (KAASLAEGAAGAVAS) are lumenal. A helical membrane pass occupies residues 181-201 (FNPGYFWMFTNCITSALFVLI). Topologically, residues 202 to 215 (MRKRIKLTNFKDFD) are cytoplasmic. A helical transmembrane segment spans residues 216-236 (TMFYNNVLALPILLLFSFCVE). Topologically, residues 237-252 (DWSSVNLTNNFSNDSL) are lumenal. N-linked (GlcNAc...) asparagine glycans are attached at residues asparagine 242, asparagine 246, and asparagine 249. The helical transmembrane segment at 253-273 (TAMIISGVASVGISYCSGWCV) threads the bilayer. Residues 274-279 (RVTSST) lie on the Cytoplasmic side of the membrane. The chain crosses the membrane as a helical span at residues 280 to 300 (TYSMVGALNKLPIALSGLIFF). The Lumenal segment spans residues 301–304 (DAPR). The helical transmembrane segment at 305–325 (NFLSILSIFIGFLSGIIYAVA) threads the bilayer. Residues 326–337 (KQKKQQAQPLRK) lie on the Cytoplasmic side of the membrane.

The protein belongs to the TPT transporter family. SLC35D subfamily. Homooligomer.

The protein resides in the golgi apparatus membrane. The protein localises to the cytoplasmic vesicle membrane. It localises to the endoplasmic reticulum membrane. Its function is as follows. Involved in the import of GDP-mannose from the cytoplasm into the Golgi lumen. Defective copy causes severe glycosylation defect and abnormal retention of soluble endoplasmic reticulum proteins. Involved in vanadate sensitivity. The sequence is that of GDP-mannose transporter 1 (VRG4) from Saccharomyces cerevisiae (strain YJM789) (Baker's yeast).